The chain runs to 227 residues: Cytochrome c oxidase subunit 2 (227 aa).

The Mitochondrial intermembrane segment spans residues Met-1–Ser-14. Residues Pro-15–Met-45 form a helical membrane-spanning segment. At Leu-46 to Gln-59 the chain is on the mitochondrial matrix side. The chain crosses the membrane as a helical span at residues Glu-60–Met-87. Over Asp-88–Ile-227 the chain is Mitochondrial intermembrane. 6 residues coordinate Cu cation: His-161, Cys-196, Glu-198, Cys-200, His-204, and Met-207. Glu-198 is a Mg(2+) binding site.

Belongs to the cytochrome c oxidase subunit 2 family. Component of the cytochrome c oxidase (complex IV, CIV), a multisubunit enzyme composed of 14 subunits. The complex is composed of a catalytic core of 3 subunits MT-CO1, MT-CO2 and MT-CO3, encoded in the mitochondrial DNA, and 11 supernumerary subunits COX4I, COX5A, COX5B, COX6A, COX6B, COX6C, COX7A, COX7B, COX7C, COX8 and NDUFA4, which are encoded in the nuclear genome. The complex exists as a monomer or a dimer and forms supercomplexes (SCs) in the inner mitochondrial membrane with NADH-ubiquinone oxidoreductase (complex I, CI) and ubiquinol-cytochrome c oxidoreductase (cytochrome b-c1 complex, complex III, CIII), resulting in different assemblies (supercomplex SCI(1)III(2)IV(1) and megacomplex MCI(2)III(2)IV(2)). Found in a complex with TMEM177, COA6, COX18, COX20, SCO1 and SCO2. Interacts with TMEM177 in a COX20-dependent manner. Interacts with COX20. Interacts with COX16. Requires Cu cation as cofactor.

It localises to the mitochondrion inner membrane. It catalyses the reaction 4 Fe(II)-[cytochrome c] + O2 + 8 H(+)(in) = 4 Fe(III)-[cytochrome c] + 2 H2O + 4 H(+)(out). In terms of biological role, component of the cytochrome c oxidase, the last enzyme in the mitochondrial electron transport chain which drives oxidative phosphorylation. The respiratory chain contains 3 multisubunit complexes succinate dehydrogenase (complex II, CII), ubiquinol-cytochrome c oxidoreductase (cytochrome b-c1 complex, complex III, CIII) and cytochrome c oxidase (complex IV, CIV), that cooperate to transfer electrons derived from NADH and succinate to molecular oxygen, creating an electrochemical gradient over the inner membrane that drives transmembrane transport and the ATP synthase. Cytochrome c oxidase is the component of the respiratory chain that catalyzes the reduction of oxygen to water. Electrons originating from reduced cytochrome c in the intermembrane space (IMS) are transferred via the dinuclear copper A center (CU(A)) of subunit 2 and heme A of subunit 1 to the active site in subunit 1, a binuclear center (BNC) formed by heme A3 and copper B (CU(B)). The BNC reduces molecular oxygen to 2 water molecules using 4 electrons from cytochrome c in the IMS and 4 protons from the mitochondrial matrix. In Maxomys bartelsii (Bartels's Javan maxomys), this protein is Cytochrome c oxidase subunit 2 (MT-CO2).